A 359-amino-acid chain; its full sequence is MISNGTGSSFCLDSPPCRITVSVVLTVLILITIAGNVVVCLAVGLNRRLRSLTNCFIVSLAITDLLLGLLVLPFSAFYQLSCRWSFGKVFCNIYTSLDVMLCTASILNLFMISLDRYCAVTDPLRYPVLITPVRVAVSLVLIWVISITLSFLSIHLGWNSRNETSSFNHTIPKCKVQVNLVYGLVDGLVTFYLPLLVMCITYYRIFKIARDQAKRIHHMGSWKAATIGEHKATVTLAAVMGAFIICWFPYFTVFVYRGLKGDDAINEAFEAVVLWLGYANSALNPILYATLNRDFRTAYQQLFRCRPASHNAQETSLRSNSSQLARNQSREPMRQEEKPLKLQVWSGTEVTAPRGATDR.

Residues 1–22 lie on the Extracellular side of the membrane; that stretch reads MISNGTGSSFCLDSPPCRITVS. N4 carries N-linked (GlcNAc...) asparagine glycosylation. Residues 23 to 44 form a helical membrane-spanning segment; the sequence is VVLTVLILITIAGNVVVCLAVG. The Cytoplasmic segment spans residues 45–57; it reads LNRRLRSLTNCFI. A helical membrane pass occupies residues 58 to 81; that stretch reads VSLAITDLLLGLLVLPFSAFYQLS. The Extracellular portion of the chain corresponds to 82–92; the sequence is CRWSFGKVFCN. An intrachain disulfide couples C91 to C174. The chain crosses the membrane as a helical span at residues 93–114; that stretch reads IYTSLDVMLCTASILNLFMISL. At 115–134 the chain is on the cytoplasmic side; sequence DRYCAVTDPLRYPVLITPVR. The helical transmembrane segment at 135–159 threads the bilayer; it reads VAVSLVLIWVISITLSFLSIHLGWN. Residues 160 to 180 lie on the Extracellular side of the membrane; it reads SRNETSSFNHTIPKCKVQVNL. Residues 181–204 form a helical membrane-spanning segment; it reads VYGLVDGLVTFYLPLLVMCITYYR. The Cytoplasmic segment spans residues 205–234; it reads IFKIARDQAKRIHHMGSWKAATIGEHKATV. Residues 235–258 traverse the membrane as a helical segment; sequence TLAAVMGAFIICWFPYFTVFVYRG. At 259–267 the chain is on the extracellular side; sequence LKGDDAINE. The chain crosses the membrane as a helical span at residues 268–289; sequence AFEAVVLWLGYANSALNPILYA. Over 290-359 the chain is Cytoplasmic; the sequence is TLNRDFRTAY…VTAPRGATDR (70 aa). C305 is lipidated: S-palmitoyl cysteine. Residues 310–327 are compositionally biased toward polar residues; that stretch reads HNAQETSLRSNSSQLARN. Residues 310–359 are disordered; that stretch reads HNAQETSLRSNSSQLARNQSREPMRQEEKPLKLQVWSGTEVTAPRGATDR. Residues 328–340 show a composition bias toward basic and acidic residues; the sequence is QSREPMRQEEKPL.

Belongs to the G-protein coupled receptor 1 family. In terms of tissue distribution, gastric fundus and, to a lesser extent, in brain.

It is found in the cell membrane. Its function is as follows. The H2 subclass of histamine receptors mediates gastric acid secretion. The activity of this receptor is mediated by G proteins which activate adenylyl cyclase. This is Histamine H2 receptor (HRH2) from Canis lupus familiaris (Dog).